A 91-amino-acid polypeptide reads, in one-letter code: DNA-directed RNA polymerase subunit omega (91 aa).

The protein belongs to the RNA polymerase subunit omega family. As to quaternary structure, the RNAP catalytic core consists of 2 alpha, 1 beta, 1 beta' and 1 omega subunit. When a sigma factor is associated with the core the holoenzyme is formed, which can initiate transcription.

The catalysed reaction is RNA(n) + a ribonucleoside 5'-triphosphate = RNA(n+1) + diphosphate. Promotes RNA polymerase assembly. Latches the N- and C-terminal regions of the beta' subunit thereby facilitating its interaction with the beta and alpha subunits. This chain is DNA-directed RNA polymerase subunit omega, found in Syntrophus aciditrophicus (strain SB).